The chain runs to 616 residues: Probable galacturonosyltransferase 4 (616 aa).

At 1 to 6 (MMVKLR) the chain is on the cytoplasmic side. A helical; Signal-anchor for type II membrane protein transmembrane segment spans residues 7 to 29 (NLVLFFMLLTVVAHILLYTDPAA). Residues 30-616 (SFKTPFSKRD…VYLRECNINP (587 aa)) are Lumenal-facing. The segment at 132-152 (QTSEKVDEQPEPNAFGAKKDT) is disordered. N291, N326, N378, N481, and N514 each carry an N-linked (GlcNAc...) asparagine glycan.

The protein belongs to the glycosyltransferase 8 family. Expressed in roots, inflorescences, siliques, leaves and stems.

It is found in the golgi apparatus membrane. It functions in the pathway glycan metabolism; pectin biosynthesis. Its function is as follows. May be involved in pectin and/or xylans biosynthesis in cell walls. This is Probable galacturonosyltransferase 4 (GAUT4) from Arabidopsis thaliana (Mouse-ear cress).